The primary structure comprises 250 residues: NAD-dependent protein deacetylase 2 (250 aa).

A Deacetylase sirtuin-type domain is found at 4–250; it reads MDSKNLFKKA…LRNIWNLIKS (247 aa). NAD(+)-binding residues include alanine 29, threonine 33, phenylalanine 40, arginine 41, glutamine 107, isoleucine 109, aspartate 110, and histidine 125. Phenylalanine 40 lines the nicotinamide pocket. The nicotinamide site is built by isoleucine 109 and aspartate 110. The Proton acceptor role is filled by histidine 125. The Zn(2+) site is built by cysteine 133, cysteine 136, cysteine 158, and cysteine 161. 3 residues coordinate NAD(+): serine 198, serine 199, and asparagine 219.

The protein belongs to the sirtuin family. Class U subfamily. Requires Zn(2+) as cofactor.

It is found in the cytoplasm. It carries out the reaction N(6)-acetyl-L-lysyl-[protein] + NAD(+) + H2O = 2''-O-acetyl-ADP-D-ribose + nicotinamide + L-lysyl-[protein]. Its function is as follows. NAD-dependent protein deacetylase which modulates the activities of several enzymes which are inactive in their acetylated form. This Caldanaerobacter subterraneus subsp. tengcongensis (strain DSM 15242 / JCM 11007 / NBRC 100824 / MB4) (Thermoanaerobacter tengcongensis) protein is NAD-dependent protein deacetylase 2.